Reading from the N-terminus, the 438-residue chain is Thymidine phosphorylase (438 aa).

This sequence belongs to the thymidine/pyrimidine-nucleoside phosphorylase family. In terms of assembly, homodimer.

It carries out the reaction thymidine + phosphate = 2-deoxy-alpha-D-ribose 1-phosphate + thymine. It participates in pyrimidine metabolism; dTMP biosynthesis via salvage pathway; dTMP from thymine: step 1/2. The enzymes which catalyze the reversible phosphorolysis of pyrimidine nucleosides are involved in the degradation of these compounds and in their utilization as carbon and energy sources, or in the rescue of pyrimidine bases for nucleotide synthesis. The polypeptide is Thymidine phosphorylase (Burkholderia cenocepacia (strain ATCC BAA-245 / DSM 16553 / LMG 16656 / NCTC 13227 / J2315 / CF5610) (Burkholderia cepacia (strain J2315))).